An 812-amino-acid chain; its full sequence is MTEFPKNYNFTENEKKWQQIWQAQQIYAYDPNISKEETYVVDTPPPTVSGQLHIGHVYSYTQTDFIVRFQRMIGKNIFYPMGFDDNGLPTERLVEKQKQIKAYNMGRDEFIKICEEVVESEEEKFRRLFNQIALSVDWSLEYQTISPLSRKISQMSFLDLVKKGKIYRNDQPILWDPVDGTALAQADIEDKAKTSFMNYIIFKTEQGESLTIATTRPELLPACIAVFYHPDDKRYKHLACKSAITPLFNEKVPLLASPLVQQDKGTGLVMCCTFGDQTDITWWKTHNLPLKTIITKKGTINFPHNIAIDGLKIKEARIKIIDILKEQKLITKQEEITQTVKCAERSGAPLEILTVPQWFVKTISHKEALLKRANELNWRPNNMKIRLENWINAISWDWCISRQRYFGVPFPVWYSKRVGEEGKILYADISQLPVDPLKDLPIGYSKEEVEPDLDVMDTWATSSVSPQLSTHCISDNFAVNKDRHNKLFPMDLRPQAHEIIRTWAFYTILKAHLHQNTLPWGNIMVSGWCLAEDRSKMSKSKGNVLVPEKLLEQYGSDVIRYWSANSKLGADTAYSEDVMKNGKRLVNKLWNACKFIFIHCNKLKDVDKKASLFDIKEQITNEFDQWMINKLVELVNAATNELQNYEYANAMHLTEKFFWVIFCDNYLEISKTRSYDEENKNPQGQYSSILTLYHVMQILLKLFAPFIPHITEELYQILYSENSIHVKGNWVNYGDLHYGIDVTQSEGLIAILDIVRKFKAENNLSIKAPIKLLEVSGIELSAELTEDLKNVTSAEEIQFEGQGDKIKVNVIF.

Positions 46–56 match the 'HIGH' region motif; it reads PTVSGQLHIGH. Residues 536 to 540 carry the 'KMSKS' region motif; that stretch reads KMSKS. Lysine 539 provides a ligand contact to ATP.

The protein belongs to the class-I aminoacyl-tRNA synthetase family. ValS type 2 subfamily. As to quaternary structure, monomer.

The protein localises to the cytoplasm. The catalysed reaction is tRNA(Val) + L-valine + ATP = L-valyl-tRNA(Val) + AMP + diphosphate. Functionally, catalyzes the attachment of valine to tRNA(Val). As ValRS can inadvertently accommodate and process structurally similar amino acids such as threonine, to avoid such errors, it has a 'posttransfer' editing activity that hydrolyzes mischarged Thr-tRNA(Val) in a tRNA-dependent manner. The sequence is that of Valine--tRNA ligase from Rickettsia akari (strain Hartford).